Reading from the N-terminus, the 285-residue chain is Probable cobalamin biosynthesis protein CobD (285 aa).

A run of 4 helical transmembrane segments spans residues leucine 10 to isoleucine 32, tyrosine 45 to histidine 67, valine 145 to asparagine 167, and valine 266 to tyrosine 283.

Belongs to the CobD/CbiB family.

The protein localises to the cell membrane. It functions in the pathway cofactor biosynthesis; adenosylcobalamin biosynthesis. Functionally, converts cobyric acid to cobinamide by the addition of aminopropanol on the F carboxylic group. This is Probable cobalamin biosynthesis protein CobD from Pyrococcus furiosus (strain ATCC 43587 / DSM 3638 / JCM 8422 / Vc1).